Here is a 361-residue protein sequence, read N- to C-terminus: T-box-containing protein TBX6L (361 aa).

The T-box DNA-binding region spans 36–209 (LWMKFHQIGT…NNPFAKGFRE (174 aa)). 2 disordered regions span residues 203–259 (FAKG…VKEE) and 280–323 (HAFP…QLPS). Basic and acidic residues-rich tracts occupy residues 206 to 220 (GFREHGKNTRREGRA) and 234 to 259 (KLPEEKESGAEERDFEKDENVDVKEE). Residues 280-290 (HAFPAASPAPA) show a composition bias toward low complexity.

The protein resides in the nucleus. Functionally, may be involved in regulating somitogenesis. The sequence is that of T-box-containing protein TBX6L (TBX6L) from Gallus gallus (Chicken).